Consider the following 180-residue polypeptide: Large ribosomal subunit protein uL10 (180 aa).

The tract at residues 161–180 (SKAEGSEETESNETTETVEE) is disordered. Acidic residues predominate over residues 166–180 (SEETESNETTETVEE).

This sequence belongs to the universal ribosomal protein uL10 family. Part of the ribosomal stalk of the 50S ribosomal subunit. The N-terminus interacts with L11 and the large rRNA to form the base of the stalk. The C-terminus forms an elongated spine to which L12 dimers bind in a sequential fashion forming a multimeric L10(L12)X complex.

Forms part of the ribosomal stalk, playing a central role in the interaction of the ribosome with GTP-bound translation factors. The chain is Large ribosomal subunit protein uL10 from Finegoldia magna (strain ATCC 29328 / DSM 20472 / WAL 2508) (Peptostreptococcus magnus).